A 506-amino-acid polypeptide reads, in one-letter code: Glutamate--tRNA ligase (506 aa).

The 'HIGH' region signature appears at 23–33; that stretch reads PSPTGTPHVGL. Residues 267-271 carry the 'KMSKS' region motif; that stretch reads KLSKR. Position 270 (K270) interacts with ATP.

This sequence belongs to the class-I aminoacyl-tRNA synthetase family. Glutamate--tRNA ligase type 1 subfamily. As to quaternary structure, monomer.

It localises to the cytoplasm. It catalyses the reaction tRNA(Glu) + L-glutamate + ATP = L-glutamyl-tRNA(Glu) + AMP + diphosphate. Catalyzes the attachment of glutamate to tRNA(Glu) in a two-step reaction: glutamate is first activated by ATP to form Glu-AMP and then transferred to the acceptor end of tRNA(Glu). This chain is Glutamate--tRNA ligase, found in Clavibacter michiganensis subsp. michiganensis (strain NCPPB 382).